The following is a 331-amino-acid chain: 6-phosphogluconolactonase (331 aa).

This sequence belongs to the cycloisomerase 2 family.

The catalysed reaction is 6-phospho-D-glucono-1,5-lactone + H2O = 6-phospho-D-gluconate + H(+). It participates in carbohydrate degradation; pentose phosphate pathway; D-ribulose 5-phosphate from D-glucose 6-phosphate (oxidative stage): step 2/3. Functionally, catalyzes the hydrolysis of 6-phosphogluconolactone to 6-phosphogluconate. This is 6-phosphogluconolactonase from Klebsiella pneumoniae (strain 342).